The primary structure comprises 376 residues: MYLKTLHLRHFRNYYDQKVEFTAAKTILVGNNAQGKSNLLEAVELLATLRSHRMARDRDFVQEEEPVAQINATLERDTGVSDLSLILRRNGRRTVALNGEPLRRQMDFLGVLNAVQFSSLDLELVRGSPEVRRNWLDTLLIQLEPVYAHILQQYNQVLRQRNAYLKKLQDSALTTQDSALAIWDAQLVTTGTKVIRRRDRALARLAPLATAWHTSISGSTEVLQINYTPNVQLVKNQPEEVQQAFLSQLQQRAVPEIYRGTTLVGPHRDEVELTINQTPARQYGSQGQQRTLVLALKLAELQLIEEVVKEPPLLLLDDVLAELDPSRQNQLLDTIQDRFQTLITTTHLSSFDAQWLNSSQILFVEQGKISTSNAVR.

30 to 37 is an ATP binding site; that stretch reads GNNAQGKS.

The protein belongs to the RecF family.

Its subcellular location is the cytoplasm. Functionally, the RecF protein is involved in DNA metabolism; it is required for DNA replication and normal SOS inducibility. RecF binds preferentially to single-stranded, linear DNA. It also seems to bind ATP. This chain is DNA replication and repair protein RecF, found in Nostoc sp. (strain PCC 7120 / SAG 25.82 / UTEX 2576).